The sequence spans 729 residues: Fatty acid oxidation complex subunit alpha (729 aa).

Positions 1 to 189 (MLYKGDTLYL…KIGLVDGVVK (189 aa)) are enoyl-CoA hydratase/isomerase. Residue D296 participates in substrate binding. Positions 311–729 (ETPKQAAVLG…ARLVGDLKTA (419 aa)) are 3-hydroxyacyl-CoA dehydrogenase. NAD(+) contacts are provided by residues M324, D343, 400 to 402 (VVE), K407, and S429. The active-site For 3-hydroxyacyl-CoA dehydrogenase activity is the H450. N453 is an NAD(+) binding site. Substrate-binding residues include N500 and Y660.

The protein in the N-terminal section; belongs to the enoyl-CoA hydratase/isomerase family. It in the C-terminal section; belongs to the 3-hydroxyacyl-CoA dehydrogenase family. As to quaternary structure, heterotetramer of two alpha chains (FadB) and two beta chains (FadA).

It catalyses the reaction a (3S)-3-hydroxyacyl-CoA + NAD(+) = a 3-oxoacyl-CoA + NADH + H(+). It carries out the reaction a (3S)-3-hydroxyacyl-CoA = a (2E)-enoyl-CoA + H2O. The catalysed reaction is a 4-saturated-(3S)-3-hydroxyacyl-CoA = a (3E)-enoyl-CoA + H2O. The enzyme catalyses (3S)-3-hydroxybutanoyl-CoA = (3R)-3-hydroxybutanoyl-CoA. It catalyses the reaction a (3Z)-enoyl-CoA = a 4-saturated (2E)-enoyl-CoA. It carries out the reaction a (3E)-enoyl-CoA = a 4-saturated (2E)-enoyl-CoA. The protein operates within lipid metabolism; fatty acid beta-oxidation. Functionally, involved in the aerobic and anaerobic degradation of long-chain fatty acids via beta-oxidation cycle. Catalyzes the formation of 3-oxoacyl-CoA from enoyl-CoA via L-3-hydroxyacyl-CoA. It can also use D-3-hydroxyacyl-CoA and cis-3-enoyl-CoA as substrate. In Escherichia coli (strain SE11), this protein is Fatty acid oxidation complex subunit alpha.